We begin with the raw amino-acid sequence, 444 residues long: ATP-dependent protease ATPase subunit HslU (444 aa).

Residues V18, 60–65 (GVGKTE), D258, E323, and R395 contribute to the ATP site.

It belongs to the ClpX chaperone family. HslU subfamily. In terms of assembly, a double ring-shaped homohexamer of HslV is capped on each side by a ring-shaped HslU homohexamer. The assembly of the HslU/HslV complex is dependent on binding of ATP.

Its subcellular location is the cytoplasm. Functionally, ATPase subunit of a proteasome-like degradation complex; this subunit has chaperone activity. The binding of ATP and its subsequent hydrolysis by HslU are essential for unfolding of protein substrates subsequently hydrolyzed by HslV. HslU recognizes the N-terminal part of its protein substrates and unfolds these before they are guided to HslV for hydrolysis. The chain is ATP-dependent protease ATPase subunit HslU from Thioalkalivibrio sulfidiphilus (strain HL-EbGR7).